Reading from the N-terminus, the 112-residue chain is Cell cycle protein GpsB (112 aa).

Positions 38–72 (IKDYEAFHKEFEQLKQQNARLKRELEEQKLVATQV) form a coiled coil.

Belongs to the GpsB family. As to quaternary structure, forms polymers through the coiled coil domains. Interacts with PBP1, MreC and EzrA.

Its subcellular location is the cytoplasm. In terms of biological role, divisome component that associates with the complex late in its assembly, after the Z-ring is formed, and is dependent on DivIC and PBP2B for its recruitment to the divisome. Together with EzrA, is a key component of the system that regulates PBP1 localization during cell cycle progression. Its main role could be the removal of PBP1 from the cell pole after pole maturation is completed. Also contributes to the recruitment of PBP1 to the division complex. Not essential for septum formation. In Bacillus cereus (strain ZK / E33L), this protein is Cell cycle protein GpsB.